Here is a 702-residue protein sequence, read N- to C-terminus: Acetylcholinesterase (702 aa).

The first 36 residues, 1 to 36, serve as a signal peptide directing secretion; sequence MEIRGLITRLLGPCHLRHLILCSLGLYSILVQSVHC. The interval 107–134 is disordered; the sequence is HIHSTTTRRRGLTRRESSSDATDSDPLV. Asn-187 carries N-linked (GlcNAc...) asparagine glycosylation. Cys-195 and Cys-222 are joined by a disulfide. Ser-327 acts as the Acyl-ester intermediate in catalysis. Cys-381 and Cys-394 form a disulfide bridge. Active-site charge relay system residues include Glu-453 and His-567. A disulfide bridge connects residues Cys-529 and Cys-650. Asn-637 carries an N-linked (GlcNAc...) asparagine glycan.

Belongs to the type-B carboxylesterase/lipase family.

The protein resides in the synapse. Its subcellular location is the secreted. The protein localises to the cell membrane. It catalyses the reaction acetylcholine + H2O = choline + acetate + H(+). Its function is as follows. Rapidly hydrolyzes choline released into the synapse. This chain is Acetylcholinesterase (ACHE1), found in Culex pipiens (House mosquito).